We begin with the raw amino-acid sequence, 280 residues long: Small ribosomal subunit protein uS15m (280 aa).

This sequence belongs to the universal ribosomal protein uS15 family. As to quaternary structure, component of the mitochondrial ribosome small subunit (28S) which comprises a 12S rRNA and about 30 distinct proteins. Expressed in anterior and posterior midgut primordia in stage 11 embryos. In stage 13 embryos, expression is high in the developing midgut and hindgut. In stage 16 embryos, expression is elevated in the midgut, hindgut, and in a small region that will give rise to pharyngeal muscles and to the stomatogastric nervous system. In larvae, expression is predominant in the gut, and head, presumably in pharyngeal muscles.

The protein localises to the mitochondrion. Functionally, essential for gut mitochondrial activity. Might be involved in tissue specific growth factor production. The protein is Small ribosomal subunit protein uS15m (bonsai) of Drosophila melanogaster (Fruit fly).